The sequence spans 558 residues: Dihydroxy-acid dehydratase (558 aa).

Cys50 is a binding site for [2Fe-2S] cluster. Asp82 provides a ligand contact to Mg(2+). [2Fe-2S] cluster is bound at residue Cys123. Asp124 and Lys125 together coordinate Mg(2+). Lys125 carries the N6-carboxylysine modification. Cys195 is a binding site for [2Fe-2S] cluster. Glu447 contributes to the Mg(2+) binding site. The Proton acceptor role is filled by Ser472.

It belongs to the IlvD/Edd family. As to quaternary structure, homodimer. The cofactor is [2Fe-2S] cluster. It depends on Mg(2+) as a cofactor.

It catalyses the reaction (2R)-2,3-dihydroxy-3-methylbutanoate = 3-methyl-2-oxobutanoate + H2O. The enzyme catalyses (2R,3R)-2,3-dihydroxy-3-methylpentanoate = (S)-3-methyl-2-oxopentanoate + H2O. The protein operates within amino-acid biosynthesis; L-isoleucine biosynthesis; L-isoleucine from 2-oxobutanoate: step 3/4. Its pathway is amino-acid biosynthesis; L-valine biosynthesis; L-valine from pyruvate: step 3/4. Functions in the biosynthesis of branched-chain amino acids. Catalyzes the dehydration of (2R,3R)-2,3-dihydroxy-3-methylpentanoate (2,3-dihydroxy-3-methylvalerate) into 2-oxo-3-methylpentanoate (2-oxo-3-methylvalerate) and of (2R)-2,3-dihydroxy-3-methylbutanoate (2,3-dihydroxyisovalerate) into 2-oxo-3-methylbutanoate (2-oxoisovalerate), the penultimate precursor to L-isoleucine and L-valine, respectively. In Saccharolobus islandicus (strain Y.N.15.51 / Yellowstone #2) (Sulfolobus islandicus), this protein is Dihydroxy-acid dehydratase.